A 916-amino-acid polypeptide reads, in one-letter code: MVQKESQAALEERESERNANPAAASGASLEQSVAPAPGEDNPSGAGAAAVVGAAGGARRFLCGVVEGFYGRPWVMEQRKELFRRLQKWELNTYLYAPKDDYKHRMFWREMYSVEEAEQLMTLISAAREYEIEFIYAISPGLDITFSNPKEVSTLKRKLDQVSQFGCRSFALLFDDIDHNMCAADKEVFSSFAHAQVSITNEIYQYLGEPETFLFCPTEYCGTFCYPNVSQSPYLRTVGEKLLPGIEVLWTGPKVVSKEIPVESIEEVSKIIKRAPVIWDNIHANDYDQKRLFLGPYKGRSTELIPRLKGVLTNPNCEFEANYVAIHTLATWYKSNMNGVRKDVVMTDSEDSTVSIQIKLENEGSDEDIETDVLYSPQMALKLALTEWLQEFGVPHQYSSRQVAHSGAKTSVVDGTPLVAAPSLNATTVVTTVYQEPIMSQGAALSGEPSVLTKEEEKKQPDEEPMDMVVEKQEEAEHKNDNQILTEIVEAKMAEELRPMDTDKESMAESKSPEMSMQEDCIPDVAPMQTDEQTQKEQFVPGPNEKPLYTAEPVTLEDLQLLADLFYLPYEHGPKGAQMLREFQWLRANSSVVSVNCKGKDSEKIEEWRSRAAKFEEMCALVMGMFTRLSNCANRTILYDMYSYVWDIKSIMSMVKSFVQWLGCRSHSSAQFLIGDQEPWAFRGGLAGEFQRLLPIDGANDLFFQPPPLTPTSKVYTIRPYFPKDEASVYKICREMYDDGVGFPFQSQPDLIGDKLVGGLLSLSLDYCFVLEDEDGICGYALGTVDVTPFIKKCKISWIPFMQEKYTKPNGDKELSEAEKIMLSFHEEQEVLPETFLANFPSLIKMDIHKKVTDPSVAKSMMACLLSSLKANGSRGAFCEVRPDDKRILEFYSKLGCFEIAKMEGFPKDVVILGRSL.

The interval 1 to 46 (MVQKESQAALEERESERNANPAAASGASLEQSVAPAPGEDNPSGAG) is disordered. Residues 60 to 336 (FLCGVVEGFY…TLATWYKSNM (277 aa)) enclose the GH84 domain. Glycine 67, lysine 98, and aspartate 174 together coordinate a protein. The active-site Proton donor is aspartate 175. A protein contacts are provided by residues tyrosine 219, 278-280 (WDN), aspartate 285, and asparagine 313. Serine 364 bears the Phosphoserine mark. A disordered region spans residues 443–465 (ALSGEPSVLTKEEEKKQPDEEPM). Residues 452 to 461 (TKEEEKKQPD) are compositionally biased toward basic and acidic residues.

Belongs to the glycosyl hydrolase 84 family. In terms of assembly, monomer. Interacts with CLOCK. In terms of processing, proteolytically cleaved by caspase-3 during apoptosis. The fragments interact with each other; cleavage does not decrease enzyme activity.

The protein localises to the cytoplasm. It is found in the nucleus. It catalyses the reaction 3-O-(N-acetyl-beta-D-glucosaminyl)-L-seryl-[protein] + H2O = N-acetyl-D-glucosamine + L-seryl-[protein]. The catalysed reaction is 3-O-(N-acetyl-beta-D-glucosaminyl)-L-threonyl-[protein] + H2O = L-threonyl-[protein] + N-acetyl-D-glucosamine. In terms of biological role, cleaves GlcNAc but not GalNAc from O-glycosylated proteins. Deglycosylates a large and diverse number of proteins, such as CRYAB, ELK1, GSDMD, LMNB1 and TAB1. Can use p-nitrophenyl-beta-GlcNAc and 4-methylumbelliferone-GlcNAc as substrates but not p-nitrophenyl-beta-GalNAc or p-nitrophenyl-alpha-GlcNAc (in vitro). Does not bind acetyl-CoA and does not have histone acetyltransferase activity. The chain is Protein O-GlcNAcase from Mus musculus (Mouse).